Consider the following 196-residue polypeptide: Potassium-transporting ATPase KdpC subunit (196 aa).

The helical transmembrane segment at 7 to 27 threads the bilayer; that stretch reads PAIVSAGLFTVLLGLAYPLAV.

Belongs to the KdpC family. In terms of assembly, the system is composed of three essential subunits: KdpA, KdpB and KdpC.

Its subcellular location is the cell inner membrane. Part of the high-affinity ATP-driven potassium transport (or Kdp) system, which catalyzes the hydrolysis of ATP coupled with the electrogenic transport of potassium into the cytoplasm. This subunit acts as a catalytic chaperone that increases the ATP-binding affinity of the ATP-hydrolyzing subunit KdpB by the formation of a transient KdpB/KdpC/ATP ternary complex. This Caulobacter sp. (strain K31) protein is Potassium-transporting ATPase KdpC subunit.